The following is a 210-amino-acid chain: 3,4-dihydroxy-2-butanone 4-phosphate synthase (210 aa).

Residues 33–34 (RE), aspartate 38, 146–150 (RRGHT), and glutamate 170 each bind D-ribulose 5-phosphate. Residue glutamate 34 coordinates Mg(2+). Histidine 149 contacts Mg(2+).

The protein belongs to the DHBP synthase family. As to quaternary structure, homodimer. Mg(2+) is required as a cofactor. Mn(2+) serves as cofactor.

The enzyme catalyses D-ribulose 5-phosphate = (2S)-2-hydroxy-3-oxobutyl phosphate + formate + H(+). Its pathway is cofactor biosynthesis; riboflavin biosynthesis; 2-hydroxy-3-oxobutyl phosphate from D-ribulose 5-phosphate: step 1/1. Catalyzes the conversion of D-ribulose 5-phosphate to formate and 3,4-dihydroxy-2-butanone 4-phosphate. The polypeptide is 3,4-dihydroxy-2-butanone 4-phosphate synthase (Chromobacterium violaceum (strain ATCC 12472 / DSM 30191 / JCM 1249 / CCUG 213 / NBRC 12614 / NCIMB 9131 / NCTC 9757 / MK)).